The following is a 218-amino-acid chain: Grancalcin (218 aa).

EF-hand domains lie at S49–S84, G85–W119, S120–R155, and L156–D191. 9 residues coordinate Ca(2+): D103, D105, T107, K109, D133, D135, S137, T139, and E144.

Homodimer. Interacts with SRI and LCP1.

The protein localises to the cytoplasm. It localises to the cytoplasmic granule membrane. In terms of biological role, calcium-binding protein that may play a role in the adhesion of neutrophils to fibronectin. May play a role in the formation of focal adhesions. This chain is Grancalcin (GCA), found in Pongo abelii (Sumatran orangutan).